The primary structure comprises 768 residues: MLKAPFLPIRDLVIFPNVVTPIYVGRANSIATLEKAIANKTKLVLGLQKDASQENPTFDGDIYEVGVIANIVQIIRMPNNNIKVLVEAEDRVKIKNIEKEENEYVTTYTVIKETLKDSKETEAIYRKVFTRFEKYVSMIGKFSSELILNLKKIEDYSNGLDIMASNLNISSEKKQEILEISNVRDRGYRILDEIVAEMEIASLEKTIDDKVKNKMNEAQRAYYLKEKISVMKEELGDFSQDDDVIEIVDRLKNTELPKEVREKLEAEVKKLTKMQPFSAESSVIRNYIEAVLELPWNSETNDVLDLKKASQILERDHYGLKDAKEKVLDYLAVKKLNPSMNGVILCLSGPPGIGKTSLVKSIAESMGRKFVRVSLGGVRDEAEIRGHRRTYVGSMPGKIMKAMKEAGTNNPVMLLDEIDKMSNDFKGDPASAMLEVLDPEQNKNFEDHYIDMPFDLSKVFFVATANDLRNVSAPLRDRMDILQLSSYTEFEKLHIAQKFLLKQAQKENGLANIDIKIPDKVMFKLIDEYTREAGVRNLKREIITICRKLAREVVEKDTKKFNLKPTDLEKYLGKAKFRPEKSRKATGKIGVVNGLAWTAVGGVTLDVQGVDTPGKGEVTLTGTLGNVMKESASVAMTYVKANLKKYPPKDKDFFKDRTIHLHFPEGATPKDGPSAGITITTAIVSVLTNKKVRQDIAMTGEITITGDVLAIGGVREKVIGAHRAGIKEVILPEDNRVDTDEIPDELKSTMKIHFAKTYDDVSKLVFVK.

The region spanning 4-198 (APFLPIRDLV…RILDEIVAEM (195 aa)) is the Lon N-terminal domain. Residue 349–356 (GPPGIGKT) coordinates ATP. The region spanning 586–768 (TGKIGVVNGL…DDVSKLVFVK (183 aa)) is the Lon proteolytic domain. Residues S674 and K717 contribute to the active site.

The protein belongs to the peptidase S16 family. In terms of assembly, homohexamer. Organized in a ring with a central cavity.

The protein localises to the cytoplasm. The enzyme catalyses Hydrolysis of proteins in presence of ATP.. In terms of biological role, ATP-dependent serine protease that mediates the selective degradation of mutant and abnormal proteins as well as certain short-lived regulatory proteins. Required for cellular homeostasis and for survival from DNA damage and developmental changes induced by stress. Degrades polypeptides processively to yield small peptide fragments that are 5 to 10 amino acids long. Binds to DNA in a double-stranded, site-specific manner. The sequence is that of Lon protease from Fusobacterium nucleatum subsp. nucleatum (strain ATCC 25586 / DSM 15643 / BCRC 10681 / CIP 101130 / JCM 8532 / KCTC 2640 / LMG 13131 / VPI 4355).